A 355-amino-acid polypeptide reads, in one-letter code: Guanine nucleotide-binding protein G(i) subunit alpha-2 (355 aa).

The N-myristoyl glycine moiety is linked to residue Gly-2. A lipid anchor (S-palmitoyl cysteine) is attached at Cys-3. Residues 32–355 form the G-alpha domain; sequence REVKLLLLGA…KNNLKDCGLF (324 aa). The interval 35–48 is G1 motif; that stretch reads KLLLLGAGESGKST. GTP-binding positions include 40-47, 176-182, 201-205, 270-273, and Ala-327; these read GAGESGKS, LRTRVKT, DVGGQ, and NKKD. Positions 47 and 182 each coordinate Mg(2+). Residues 174–182 are G2 motif; that stretch reads DVLRTRVKT. Residues 197–206 are G3 motif; sequence FKMFDVGGQR. Residues 266 to 273 form a G4 motif region; that stretch reads ILFLNKKD. Residues 325–330 form a G5 motif region; sequence TCATDT.

Belongs to the G-alpha family. G(i/o/t/z) subfamily. In terms of assembly, g proteins are composed of 3 units; alpha, beta and gamma. The alpha chain contains the guanine nucleotide binding site.

It is found in the cytoplasm. The protein resides in the cytoskeleton. It localises to the microtubule organizing center. Its subcellular location is the centrosome. The protein localises to the cell membrane. In terms of biological role, guanine nucleotide-binding proteins (G proteins) are involved as modulators or transducers in various transmembrane signaling systems. The G(i) proteins are involved in hormonal regulation of adenylate cyclase: they inhibit the cyclase in response to beta-adrenergic stimuli. May play a role in cell division. The polypeptide is Guanine nucleotide-binding protein G(i) subunit alpha-2 (gnai2) (Oryzias latipes (Japanese rice fish)).